The sequence spans 246 residues: Acetoacetyl-CoA reductase (246 aa).

Residues 13-15 (GGI), G35, R40, 60-62 (GNV), and 88-92 (NAGIT) each bind NADP(+). Residues D94 and 147–150 (QFGQ) each bind substrate. Catalysis depends on Y153, which acts as the Proton acceptor. 183–186 (PGYI) lines the NADP(+) pocket. Substrate is bound by residues 184–185 (GY) and R195.

This sequence belongs to the short-chain dehydrogenases/reductases (SDR) family. Homotetramer.

It localises to the cytoplasm. It carries out the reaction a (3R)-3-hydroxyacyl-CoA + NADP(+) = a 3-oxoacyl-CoA + NADPH + H(+). The catalysed reaction is (3R)-3-hydroxybutanoyl-CoA + NADP(+) = acetoacetyl-CoA + NADPH + H(+). Its pathway is biopolymer metabolism; poly-(R)-3-hydroxybutanoate biosynthesis. In terms of biological role, catalyzes the chiral reduction of acetoacetyl-CoA to (R)-3-hydroxybutyryl-CoA. Is involved in the biosynthesis of polyhydroxybutyrate (PHB), which is accumulated as an intracellular energy reserve material when cells grow under conditions of nutrient limitation. In Cupriavidus necator (strain ATCC 17699 / DSM 428 / KCTC 22496 / NCIMB 10442 / H16 / Stanier 337) (Ralstonia eutropha), this protein is Acetoacetyl-CoA reductase.